The primary structure comprises 45 residues: Thymosin beta-15A (45 aa).

Basic and acidic residues-rich tracts occupy residues 1 to 27 (MSDKPDLSEVEKFDRSKLKKTNTEEKN) and 35 to 45 (IQQEKECVQTS). Positions 1–45 (MSDKPDLSEVEKFDRSKLKKTNTEEKNTLPSKETIQQEKECVQTS) are disordered.

The protein belongs to the thymosin beta family. Neuroblastoma-specific.

It is found in the cytoplasm. The protein localises to the cytoskeleton. In terms of biological role, plays an important role in the organization of the cytoskeleton. Binds to and sequesters actin monomers (G actin) and therefore inhibits actin polymerization. The polypeptide is Thymosin beta-15A (TMSB15A) (Homo sapiens (Human)).